The primary structure comprises 470 residues: 5-hydroxytryptamine receptor 2A (470 aa).

The Extracellular portion of the chain corresponds to 1–80; that stretch reads MDVLCEENTS…LQEKNWSALL (80 aa). Asparagine 8, asparagine 38, asparagine 44, asparagine 51, asparagine 54, and asparagine 75 each carry an N-linked (GlcNAc...) asparagine glycan. A helical membrane pass occupies residues 81–97; sequence TAVVIILTIAGNILVIM. Topologically, residues 98 to 111 are cytoplasmic; sequence AVSLEKKLQNATNY. The chain crosses the membrane as a helical span at residues 112 to 137; that stretch reads FLMSLAIADMLLGFLVMPVSMLTILY. The Extracellular portion of the chain corresponds to 138 to 146; sequence GYRWPLPSK. A helical transmembrane segment spans residues 147–171; it reads LCAVWIYLDVLFSTASIMHLCAISL. The cysteines at positions 148 and 227 are disulfide-linked. Aspartate 155 provides a ligand contact to serotonin. The DRY motif; important for ligand-induced conformation changes signature appears at 172–174; the sequence is DRY. At 172-191 the chain is on the cytoplasmic side; sequence DRYVAIQNPIHHRRFNSRTK. Residues 192–215 traverse the membrane as a helical segment; sequence AFLKIIAVWTISVGISMPIPVFGL. Residues 216-232 are Extracellular-facing; it reads QDDSKVFKEGSCLLADD. The chain crosses the membrane as a helical span at residues 233 to 258; the sequence is NFVLIGSFVSFFIPLTIMVITYFLTI. Over 259–321 the chain is Cytoplasmic; that stretch reads KSLQKEATLC…QSISNEQKAC (63 aa). Serine 280 carries the phosphoserine modification. The chain crosses the membrane as a helical span at residues 322–347; the sequence is KVLGIVFFLFVVMWCPFFITNIMAVI. Asparagine 342 serves as a coordination point for serotonin. Cysteine 348 and cysteine 352 form a disulfide bridge. Residues 348–355 lie on the Extracellular side of the membrane; the sequence is CKESCNED. Residues 356–381 traverse the membrane as a helical segment; it reads VIGALLNVFVWIGYLSSAVNPLVYTL. Residues 375 to 379 carry the NPxxY motif; important for ligand-induced conformation changes and signaling motif; it reads NPLVY. Over 382-470 the chain is Cytoplasmic; it reads FNKTYRSAFS…NTVNEKVSCV (89 aa). The disordered stretch occupies residues 448–470; it reads GKQHSEDAPADNSNTVNEKVSCV. The segment covering 458–470 has biased composition (polar residues); the sequence is DNSNTVNEKVSCV. A PDZ-binding motif is present at residues 468–470; that stretch reads SCV.

This sequence belongs to the G-protein coupled receptor 1 family. As to quaternary structure, interacts (via C-terminus) with MPDZ and PATJ. May interact (via C-terminus) with MPP3, PRDX6, DLG4, DLG1, CASK, APBA1 and MAGI2. Interacts with GRM2 and DRD2; this may affect signaling.

The protein resides in the cell membrane. Its subcellular location is the cell projection. It localises to the dendrite. It is found in the axon. The protein localises to the cytoplasmic vesicle. The protein resides in the membrane. Its subcellular location is the caveola. It localises to the presynapse. Its activity is regulated as follows. G-protein coupled receptor activity is regulated by lipids: oleamide increases HTR2A-mediated activity. In terms of biological role, G-protein coupled receptor for 5-hydroxytryptamine (serotonin). Also functions as a receptor for various drugs and psychoactive substances, including mescaline, psilocybin, 1-(2,5-dimethoxy-4-iodophenyl)-2-aminopropane (DOI) and lysergic acid diethylamide (LSD). Ligand binding causes a conformation change that triggers signaling via guanine nucleotide-binding proteins (G proteins) and modulates the activity of downstream effectors. HTR2A is coupled to G(q)/G(11) G alpha proteins and activates phospholipase C-beta, releasing diacylglycerol (DAG) and inositol 1,4,5-trisphosphate (IP3) second messengers that modulate the activity of phosphatidylinositol 3-kinase and promote the release of Ca(2+) ions from intracellular stores, respectively. Beta-arrestin family members inhibit signaling via G proteins and mediate activation of alternative signaling pathways. Affects neural activity, perception, cognition and mood. Plays a role in the regulation of behavior, including responses to anxiogenic situations and psychoactive substances. Plays a role in intestinal smooth muscle contraction, and may play a role in arterial vasoconstriction. The protein is 5-hydroxytryptamine receptor 2A (HTR2A) of Sus scrofa (Pig).